Reading from the N-terminus, the 179-residue chain is ATP-dependent protease subunit HslV (179 aa).

Residue threonine 8 is part of the active site. Residues serine 164, cysteine 167, and threonine 170 each contribute to the Na(+) site.

This sequence belongs to the peptidase T1B family. HslV subfamily. In terms of assembly, a double ring-shaped homohexamer of HslV is capped on each side by a ring-shaped HslU homohexamer. The assembly of the HslU/HslV complex is dependent on binding of ATP.

It localises to the cytoplasm. The catalysed reaction is ATP-dependent cleavage of peptide bonds with broad specificity.. With respect to regulation, allosterically activated by HslU binding. Functionally, protease subunit of a proteasome-like degradation complex believed to be a general protein degrading machinery. This chain is ATP-dependent protease subunit HslV, found in Staphylococcus carnosus (strain TM300).